Consider the following 155-residue polypeptide: Small ribosomal subunit protein bS6 (155 aa).

The tract at residues 94-155 (VKQEGPLPTP…TPELEEQVKS (62 aa)) is disordered. Polar residues predominate over residues 103–112 (PRSSNKSSNQ). Residues 113–141 (AEKKENENIDSANKSEPKADETDNKKKIT) show a composition bias toward basic and acidic residues.

This sequence belongs to the bacterial ribosomal protein bS6 family.

In terms of biological role, binds together with bS18 to 16S ribosomal RNA. This is Small ribosomal subunit protein bS6 from Prochlorococcus marinus (strain MIT 9515).